The primary structure comprises 540 residues: Peptide chain release factor 3 (540 aa).

Residues 14-283 enclose the tr-type G domain; sequence ELRRNFAIIS…YFLNYALKPG (270 aa). GTP contacts are provided by residues 23–30, 91–95, and 145–148; these read SHPDAGKT, DTPGH, and NKLD.

The protein belongs to the TRAFAC class translation factor GTPase superfamily. Classic translation factor GTPase family. PrfC subfamily.

The protein resides in the cytoplasm. In terms of biological role, increases the formation of ribosomal termination complexes and stimulates activities of RF-1 and RF-2. It binds guanine nucleotides and has strong preference for UGA stop codons. It may interact directly with the ribosome. The stimulation of RF-1 and RF-2 is significantly reduced by GTP and GDP, but not by GMP. This Trichormus variabilis (strain ATCC 29413 / PCC 7937) (Anabaena variabilis) protein is Peptide chain release factor 3.